Here is a 313-residue protein sequence, read N- to C-terminus: 4-hydroxy-3-methylbut-2-enyl diphosphate reductase (313 aa).

Residue C12 participates in [4Fe-4S] cluster binding. Residues H41 and H74 each contribute to the (2E)-4-hydroxy-3-methylbut-2-enyl diphosphate site. Positions 41 and 74 each coordinate dimethylallyl diphosphate. Positions 41 and 74 each coordinate isopentenyl diphosphate. C96 serves as a coordination point for [4Fe-4S] cluster. H124 is a (2E)-4-hydroxy-3-methylbut-2-enyl diphosphate binding site. Residue H124 participates in dimethylallyl diphosphate binding. H124 lines the isopentenyl diphosphate pocket. The active-site Proton donor is E126. T167 lines the (2E)-4-hydroxy-3-methylbut-2-enyl diphosphate pocket. C197 is a [4Fe-4S] cluster binding site. Residues S225, S226, N227, and S269 each coordinate (2E)-4-hydroxy-3-methylbut-2-enyl diphosphate. Residues S225, S226, N227, and S269 each contribute to the dimethylallyl diphosphate site. Isopentenyl diphosphate-binding residues include S225, S226, N227, and S269.

Belongs to the IspH family. [4Fe-4S] cluster serves as cofactor.

The enzyme catalyses isopentenyl diphosphate + 2 oxidized [2Fe-2S]-[ferredoxin] + H2O = (2E)-4-hydroxy-3-methylbut-2-enyl diphosphate + 2 reduced [2Fe-2S]-[ferredoxin] + 2 H(+). It carries out the reaction dimethylallyl diphosphate + 2 oxidized [2Fe-2S]-[ferredoxin] + H2O = (2E)-4-hydroxy-3-methylbut-2-enyl diphosphate + 2 reduced [2Fe-2S]-[ferredoxin] + 2 H(+). The protein operates within isoprenoid biosynthesis; dimethylallyl diphosphate biosynthesis; dimethylallyl diphosphate from (2E)-4-hydroxy-3-methylbutenyl diphosphate: step 1/1. Its pathway is isoprenoid biosynthesis; isopentenyl diphosphate biosynthesis via DXP pathway; isopentenyl diphosphate from 1-deoxy-D-xylulose 5-phosphate: step 6/6. Functionally, catalyzes the conversion of 1-hydroxy-2-methyl-2-(E)-butenyl 4-diphosphate (HMBPP) into a mixture of isopentenyl diphosphate (IPP) and dimethylallyl diphosphate (DMAPP). Acts in the terminal step of the DOXP/MEP pathway for isoprenoid precursor biosynthesis. This Baumannia cicadellinicola subsp. Homalodisca coagulata protein is 4-hydroxy-3-methylbut-2-enyl diphosphate reductase.